We begin with the raw amino-acid sequence, 153 residues long: NADH dehydrogenase [ubiquinone] 1 beta subcomplex subunit 11, mitochondrial (153 aa).

The N-terminal 29 residues, 1 to 29, are a transit peptide targeting the mitochondrion; it reads MAAGLFGLSARLLLAAAATRGLPAARVRW. The tract at residues 40–77 is disordered; sequence PSAVAGKRPPEPTTQWQEDPEPEDENLYEKNPDSHGYD. Residues 66 to 77 show a composition bias toward basic and acidic residues; sequence LYEKNPDSHGYD. Residues 89–109 traverse the membrane as a helical segment; it reads LVFFFGVSIILVLGSTFVAYL.

The protein belongs to the complex I NDUFB11 subunit family. As to quaternary structure, complex I is composed of 45 different subunits. Interacts with BCAP31.

It is found in the mitochondrion inner membrane. Its function is as follows. Accessory subunit of the mitochondrial membrane respiratory chain NADH dehydrogenase (Complex I), that is believed not to be involved in catalysis. Complex I functions in the transfer of electrons from NADH to the respiratory chain. The immediate electron acceptor for the enzyme is believed to be ubiquinone. This is NADH dehydrogenase [ubiquinone] 1 beta subcomplex subunit 11, mitochondrial (NDUFB11) from Pan troglodytes (Chimpanzee).